The sequence spans 121 residues: Acidic phospholipase A2 SpII RP4 (121 aa).

7 disulfides stabilise this stretch: cysteine 25/cysteine 114, cysteine 27/cysteine 43, cysteine 42/cysteine 94, cysteine 48/cysteine 121, cysteine 49/cysteine 87, cysteine 56/cysteine 80, and cysteine 74/cysteine 85. 3 residues coordinate Ca(2+): tyrosine 26, glycine 28, and glycine 30. Histidine 46 is a catalytic residue. Ca(2+) is bound at residue aspartate 47. Aspartate 88 is an active-site residue.

The cofactor is Ca(2+). As to expression, expressed by the venom gland.

It is found in the secreted. It carries out the reaction a 1,2-diacyl-sn-glycero-3-phosphocholine + H2O = a 1-acyl-sn-glycero-3-phosphocholine + a fatty acid + H(+). Its function is as follows. Snake venom phospholipase A2 (PLA2) which exhibits indirect hemolysis, induces mild edema inflammation in the foot pads of mice and slightly delays anticoagulant activities. In mice, not lethal, even at the highest dose, and exhibits low to moderate myotoxicity on muscular fibers. PLA2 catalyzes the calcium-dependent hydrolysis of the 2-acyl groups in 3-sn-phosphoglycerides. The protein is Acidic phospholipase A2 SpII RP4 of Bothrops alternatus (Urutu).